Here is a 591-residue protein sequence, read N- to C-terminus: Paralemmin-3 (591 aa).

4 repeats span residues Glu-171–Lys-174, Glu-183–Gln-186, Glu-224–Gln-227, and Lys-234–Asp-237. Over residues Asp-282–Glu-293 the composition is skewed to polar residues. 3 disordered regions span residues Asp-282–Gln-317, Lys-332–Asp-413, and Pro-515–Met-591. Basic and acidic residues-rich tracts occupy residues Ser-306 to Gln-317 and Glu-349 to Pro-383. Composition is skewed to polar residues over residues Gln-385–Asp-413 and Gln-528–Gln-542. Residues Ser-543 to Ser-554 show a composition bias toward low complexity. Residues Gln-559–Gln-575 show a composition bias toward polar residues. The short motif at Arg-579–Lys-583 is the Nuclear localization signal element. S-palmitoyl cysteine attachment occurs at residues Cys-585 and Cys-587. Cys-588 is modified (cysteine methyl ester). Cys-588 is lipidated: S-farnesyl cysteine. A propeptide spans Val-589 to Met-591 (removed in mature form).

Belongs to the paralemmin family. In terms of processing, may be phosphorylated during oocyte maturation. Post-translationally, palmitoylated on Cys-585 and Cys-587 and prenylated on Cys-588; which is required for membrane association. In terms of tissue distribution, in Xenopus oocyte, in the central nervous system cells of tadpoles and adult frogs, and transiently in epithelial cells of stomach and gut of tadpoles. Highly expressed in kidney.

It localises to the cytoplasm. Its subcellular location is the nucleus. The protein localises to the cell membrane. Maternal ATP-binding protein that may have multiple functions during development, one of which may be associated with the development and maintenance of the central nervous system. This is Paralemmin-3 (palm3) from Xenopus laevis (African clawed frog).